The sequence spans 481 residues: Glutamate--glyoxylate aminotransferase 2 (481 aa).

Position 291 is an N6-(pyridoxal phosphate)lysine (Lys-291). The short motif at 479-481 is the Peroxisomal targeting signal element; it reads SRM.

The protein belongs to the class-I pyridoxal-phosphate-dependent aminotransferase family. Alanine aminotransferase subfamily. As to quaternary structure, homodimer. Pyridoxal 5'-phosphate serves as cofactor. In terms of processing, the N-terminus is blocked. Expressed at low levels in seedlings, leaves, flowers, roots, and green siliques.

Its subcellular location is the peroxisome. It catalyses the reaction L-alanine + 2-oxoglutarate = pyruvate + L-glutamate. The catalysed reaction is glyoxylate + L-alanine = glycine + pyruvate. It carries out the reaction glycine + 2-oxoglutarate = glyoxylate + L-glutamate. Its pathway is photosynthesis; C4 acid pathway. The protein operates within amino-acid degradation; L-alanine degradation via transaminase pathway; pyruvate from L-alanine: step 1/1. In terms of biological role, catalyzes the Glu:glyoxylate aminotransferase (GGT), Ala:glyoxylate aminotransferase (AGT), Ala:2-oxoglutarate aminotransferase (AKT) and Glu:pyruvate aminotransferase (GPT) reactions in peroxisomes. This chain is Glutamate--glyoxylate aminotransferase 2 (GGAT2), found in Arabidopsis thaliana (Mouse-ear cress).